Consider the following 139-residue polypeptide: Insulin-like growth factor (139 aa).

Residues 1–38 (YIRRVRQGSIYSLLVESQQWCKLTLTLLLLLALLTRCT) form the signal peptide. A b region spans residues 39-67 (LSETLCGSELVDTLQFVCDDRGFFFVPQH). Residues 68–82 (VPPRRGAHRRSRARK) are c. The tract at residues 83 to 103 (GIVEECCFKGCSLRLLEMYCA) is a. The interval 104–113 (RPSKAERDVA) is d. Positions 108-139 (AERDVARPRQRPHRASQHSRRGSQSRGRGRSR) are disordered. Positions 114-139 (RPRQRPHRASQHSRRGSQSRGRGRSR) are e. Over residues 115-139 (PRQRPHRASQHSRRGSQSRGRGRSR) the composition is skewed to basic residues.

This sequence belongs to the insulin family.

Its subcellular location is the secreted. In terms of biological role, the insulin-like growth factors, isolated from plasma, are structurally and functionally related to insulin but have a much higher growth-promoting activity. The sequence is that of Insulin-like growth factor from Myxine glutinosa (Atlantic hagfish).